The primary structure comprises 335 residues: Beta-1,4-mannooligosaccharide phosphorylase (335 aa).

It belongs to the glycosyl hydrolase 130 family. As to quaternary structure, homohexamer in solution.

The catalysed reaction is [(1-&gt;4)-beta-D-mannosyl](n) + phosphate = [(1-&gt;4)-beta-D-mannosyl](n-1) + alpha-D-mannose 1-phosphate. In terms of biological role, catalyzes the phosphorolysis of beta-1,4-mannooligosaccharides to mannose 1-phosphate (Man1P) and shorter mannooligosaccharides. Can also catalyze the phosphorolysis of 4-O-beta-D-mannopyranosyl-D-glucopyranose (Man-Glc), but shows higher activity toward longer mannooligosaccharides. Involved in a mannan catabolic pathway which feeds into glycolysis. This chain is Beta-1,4-mannooligosaccharide phosphorylase, found in Ruminococcus albus (strain ATCC 27210 / DSM 20455 / JCM 14654 / NCDO 2250 / 7).